A 142-amino-acid chain; its full sequence is MKTISAKPETVKRDWYIIDADGKTLGRMAAEIAHRLRGKHKPEFTPHVDTGDYIVVINAEKVRVTGRKATDKMYYSHTGFIGGIKSISFEKLIDKAPERTIQNAVKGMLPRGPLGRAMFKKLKVYGGSEHPHTAQQPQELNI.

This sequence belongs to the universal ribosomal protein uL13 family. Part of the 50S ribosomal subunit.

This protein is one of the early assembly proteins of the 50S ribosomal subunit, although it is not seen to bind rRNA by itself. It is important during the early stages of 50S assembly. The chain is Large ribosomal subunit protein uL13 from Saccharophagus degradans (strain 2-40 / ATCC 43961 / DSM 17024).